A 499-amino-acid chain; its full sequence is Probable cytosol aminopeptidase (499 aa).

Residues Lys264 and Asp269 each coordinate Mn(2+). Lys276 is a catalytic residue. Asp287, Asp346, and Glu348 together coordinate Mn(2+). Arg350 is a catalytic residue.

This sequence belongs to the peptidase M17 family. It depends on Mn(2+) as a cofactor.

It localises to the cytoplasm. The enzyme catalyses Release of an N-terminal amino acid, Xaa-|-Yaa-, in which Xaa is preferably Leu, but may be other amino acids including Pro although not Arg or Lys, and Yaa may be Pro. Amino acid amides and methyl esters are also readily hydrolyzed, but rates on arylamides are exceedingly low.. It carries out the reaction Release of an N-terminal amino acid, preferentially leucine, but not glutamic or aspartic acids.. Functionally, presumably involved in the processing and regular turnover of intracellular proteins. Catalyzes the removal of unsubstituted N-terminal amino acids from various peptides. This Rhodopseudomonas palustris (strain BisB18) protein is Probable cytosol aminopeptidase.